Reading from the N-terminus, the 103-residue chain is 11.2 kDa protein (103 aa).

The sequence is that of 11.2 kDa protein from Pseudomonas phage Pf1 (Bacteriophage Pf1).